The following is an 83-amino-acid chain: RNA-binding protein Hfq (83 aa).

The Sm domain maps to 10 to 70 (DTFLNQVRKE…ISTVMPLRPI (61 aa)).

This sequence belongs to the Hfq family. Homohexamer.

In terms of biological role, RNA chaperone that binds small regulatory RNA (sRNAs) and mRNAs to facilitate mRNA translational regulation in response to envelope stress, environmental stress and changes in metabolite concentrations. Also binds with high specificity to tRNAs. The sequence is that of RNA-binding protein Hfq from Desulfitobacterium hafniense (strain DSM 10664 / DCB-2).